The chain runs to 503 residues: Aromatase (503 aa).

The helical transmembrane segment at 21–41 (VTVSAMPLLLIMGLLLLIWNC) threads the bilayer. Substrate is bound by residues aspartate 309 and methionine 374. Residue cysteine 437 participates in heme binding.

It belongs to the cytochrome P450 family. It depends on heme as a cofactor.

It localises to the endoplasmic reticulum membrane. The protein localises to the microsome membrane. It carries out the reaction testosterone + 3 reduced [NADPH--hemoprotein reductase] + 3 O2 = 17beta-estradiol + formate + 3 oxidized [NADPH--hemoprotein reductase] + 4 H2O + 4 H(+). The enzyme catalyses androst-4-ene-3,17-dione + 3 reduced [NADPH--hemoprotein reductase] + 3 O2 = estrone + formate + 3 oxidized [NADPH--hemoprotein reductase] + 4 H2O + 4 H(+). It catalyses the reaction androst-4-ene-3,17-dione + reduced [NADPH--hemoprotein reductase] + O2 = 19-hydroxyandrost-4-ene-3,17-dione + oxidized [NADPH--hemoprotein reductase] + H2O + H(+). The catalysed reaction is 19-hydroxyandrost-4-ene-3,17-dione + reduced [NADPH--hemoprotein reductase] + O2 = 19-oxo-androst-4-ene-3,17-dione + oxidized [NADPH--hemoprotein reductase] + 2 H2O + H(+). It carries out the reaction 19-oxo-androst-4-ene-3,17-dione + reduced [NADPH--hemoprotein reductase] + O2 = estrone + formate + oxidized [NADPH--hemoprotein reductase] + H2O + 2 H(+). The enzyme catalyses estrone + reduced [NADPH--hemoprotein reductase] + O2 = 2-hydroxyestrone + oxidized [NADPH--hemoprotein reductase] + H2O + H(+). It catalyses the reaction 17beta-hydroxy-5alpha-androstan-3-one + reduced [NADPH--hemoprotein reductase] + O2 = 17beta,19-dihydroxy-3-oxo-5alpha-androstanone + oxidized [NADPH--hemoprotein reductase] + H2O + H(+). The catalysed reaction is 17beta,19-dihydroxy-3-oxo-5alpha-androstanone + reduced [NADPH--hemoprotein reductase] + O2 = 17beta-hydroxy-3,19-dioxo-5alpha-androstanone + oxidized [NADPH--hemoprotein reductase] + 2 H2O + H(+). It carries out the reaction 17beta-hydroxy-3,19-dioxo-5alpha-androstanone + reduced [NADPH--hemoprotein reductase] + O2 = 17beta-hydroxy-3-oxo-19-nor-5alpha-androst-1-ene + formate + oxidized [NADPH--hemoprotein reductase] + H2O + 2 H(+). It participates in steroid hormone biosynthesis. Its function is as follows. A cytochrome P450 monooxygenase that catalyzes the conversion of C19 androgens, androst-4-ene-3,17-dione (androstenedione) and testosterone to the C18 estrogens, estrone and estradiol, respectively. Catalyzes three successive oxidations of C19 androgens: two conventional oxidations at C19 yielding 19-hydroxy and 19-oxo/19-aldehyde derivatives, followed by a third oxidative aromatization step that involves C1-beta hydrogen abstraction combined with cleavage of the C10-C19 bond to yield a phenolic A ring and formic acid. Alternatively, the third oxidative reaction yields a 19-norsteroid and formic acid. Converts dihydrotestosterone to delta1,10-dehydro 19-nordihydrotestosterone and may play a role in homeostasis of this potent androgen. Also displays 2-hydroxylase activity toward estrone. Mechanistically, uses molecular oxygen inserting one oxygen atom into a substrate, and reducing the second into a water molecule, with two electrons provided by NADPH via cytochrome P450 reductase (CPR; NADPH-ferrihemoprotein reductase). The sequence is that of Aromatase (Cyp19a1) from Mus musculus (Mouse).